The following is a 238-amino-acid chain: Probable solute-binding protein AdeT2 (238 aa).

It belongs to the bacterial solute-binding protein 7 family.

Functionally, mediates antimicrobial resistance via active efflux. Contributes to resistance to antibiotics such as chloramphenicol, erythromycin and novobiocin. May be part of a tripartite ATP-independent periplasmic (TRAP) transport system. This chain is Probable solute-binding protein AdeT2, found in Acinetobacter baumannii.